A 398-amino-acid polypeptide reads, in one-letter code: Dihydrolipoyllysine-residue acetyltransferase component of acetoin cleaving system (398 aa).

Positions 2-77 (AVKVVMPKLG…PPGTAICYIG (76 aa)) constitute a Lipoyl-binding domain. Lysine 43 is modified (N6-lipoyllysine). The Peripheral subunit-binding (PSBD) domain maps to 118-155 (KISPVARKIAEKAGLDLKQLKGTGPGGRIVKDDVTKAL). Residues histidine 371 and aspartate 375 contribute to the active site.

This sequence belongs to the 2-oxoacid dehydrogenase family. (R)-lipoate serves as cofactor.

It catalyses the reaction N(6)-[(R)-dihydrolipoyl]-L-lysyl-[protein] + acetyl-CoA = N(6)-[(R)-S(8)-acetyldihydrolipoyl]-L-lysyl-[protein] + CoA. Its pathway is ketone degradation; acetoin degradation. The protein is Dihydrolipoyllysine-residue acetyltransferase component of acetoin cleaving system (acoC) of Bacillus subtilis (strain 168).